Consider the following 282-residue polypeptide: 4-diphosphocytidyl-2-C-methyl-D-erythritol kinase (282 aa).

Lysine 9 is an active-site residue. Proline 98–serine 108 contributes to the ATP binding site. Residue aspartate 140 is part of the active site.

The protein belongs to the GHMP kinase family. IspE subfamily. Homodimer.

The catalysed reaction is 4-CDP-2-C-methyl-D-erythritol + ATP = 4-CDP-2-C-methyl-D-erythritol 2-phosphate + ADP + H(+). The protein operates within isoprenoid biosynthesis; isopentenyl diphosphate biosynthesis via DXP pathway; isopentenyl diphosphate from 1-deoxy-D-xylulose 5-phosphate: step 3/6. Functionally, catalyzes the phosphorylation of the position 2 hydroxy group of 4-diphosphocytidyl-2C-methyl-D-erythritol. In Salmonella paratyphi B (strain ATCC BAA-1250 / SPB7), this protein is 4-diphosphocytidyl-2-C-methyl-D-erythritol kinase.